The sequence spans 208 residues: Pyridoxine/pyridoxamine 5'-phosphate oxidase (208 aa).

FMN contacts are provided by residues 55 to 60 (RMVLLK), 70 to 71 (YT), lysine 77, and glutamine 99. Residue lysine 60 coordinates substrate. Substrate contacts are provided by tyrosine 117, arginine 121, and serine 125. FMN contacts are provided by residues 134 to 135 (QS) and tryptophan 180. Residue 186–188 (RIH) participates in substrate binding. Residue arginine 190 coordinates FMN.

This sequence belongs to the pyridoxamine 5'-phosphate oxidase family. As to quaternary structure, homodimer. The cofactor is FMN.

It carries out the reaction pyridoxamine 5'-phosphate + O2 + H2O = pyridoxal 5'-phosphate + H2O2 + NH4(+). The enzyme catalyses pyridoxine 5'-phosphate + O2 = pyridoxal 5'-phosphate + H2O2. Its pathway is cofactor metabolism; pyridoxal 5'-phosphate salvage; pyridoxal 5'-phosphate from pyridoxamine 5'-phosphate: step 1/1. The protein operates within cofactor metabolism; pyridoxal 5'-phosphate salvage; pyridoxal 5'-phosphate from pyridoxine 5'-phosphate: step 1/1. Catalyzes the oxidation of either pyridoxine 5'-phosphate (PNP) or pyridoxamine 5'-phosphate (PMP) into pyridoxal 5'-phosphate (PLP). This Pelagibacter ubique (strain HTCC1062) protein is Pyridoxine/pyridoxamine 5'-phosphate oxidase.